A 195-amino-acid polypeptide reads, in one-letter code: Magnetosome membrane protein 22 (195 aa).

A compositionally biased stretch (low complexity) spans 1–28 (MAAQTAASEAPAPAAAPADSPTTAGPTP). The segment at 1–31 (MAAQTAASEAPAPAAAPADSPTTAGPTPDSV) is disordered. Helical transmembrane passes span 45–65 (VLAA…AAVV), 90–110 (SVIA…AVAV), and 115–135 (LIPG…AGAT).

Its subcellular location is the magnetosome membrane. The protein is Magnetosome membrane protein 22 of Magnetospirillum gryphiswaldense (strain DSM 6361 / JCM 21280 / NBRC 15271 / MSR-1).